The sequence spans 199 residues: V-type proton ATPase subunit E (199 aa).

The protein belongs to the V-ATPase E subunit family.

In terms of biological role, produces ATP from ADP in the presence of a proton gradient across the membrane. The chain is V-type proton ATPase subunit E from Clostridium botulinum (strain Loch Maree / Type A3).